The chain runs to 591 residues: Speriolin (591 aa).

The stretch at 1-42 forms a coiled coil; the sequence is MSLLTNYEGLRHQIERLVRENEELKKLVRLIRENHELKSAIK. The tract at residues 1–78 is necessary for targeting centrosomes; sequence MSLLTNYEGL…NNGVFLPPSP (78 aa). Positions 302-314 are enriched in polar residues; it reads NTSDTQAQPSAAQ. Disordered stretches follow at residues 302–331 and 346–435; these read NTSDTQAQPSAAQEQVVPASVPTSPTTSPT and ATSY…ENPR. Positions 317–331 are enriched in low complexity; the sequence is VVPASVPTSPTTSPT. Composition is skewed to polar residues over residues 346–357 and 390–401; these read ATSYTPSSTTHI and PRTSSSPASVND.

The protein belongs to the speriolin family. In terms of assembly, found in a complex with CDC20, CDC27 and TUBG1. Interacts with CDC20. Detected only in testis.

It localises to the cytoplasm. It is found in the cytoskeleton. The protein localises to the microtubule organizing center. Its subcellular location is the centrosome. This Homo sapiens (Human) protein is Speriolin (SPATC1).